A 363-amino-acid polypeptide reads, in one-letter code: Aminomethyltransferase (363 aa).

The protein belongs to the GcvT family. In terms of assembly, the glycine cleavage system is composed of four proteins: P, T, L and H.

The enzyme catalyses N(6)-[(R)-S(8)-aminomethyldihydrolipoyl]-L-lysyl-[protein] + (6S)-5,6,7,8-tetrahydrofolate = N(6)-[(R)-dihydrolipoyl]-L-lysyl-[protein] + (6R)-5,10-methylene-5,6,7,8-tetrahydrofolate + NH4(+). In terms of biological role, the glycine cleavage system catalyzes the degradation of glycine. The chain is Aminomethyltransferase from Prosthecochloris aestuarii (strain DSM 271 / SK 413).